The chain runs to 1193 residues: Sperm-associated antigen 5 (1193 aa).

Residues 1–48 (MWRVKKLSLSLSPSPQTGKPSMRTPLRELTLQPGALTNSGKRSPACSS) are disordered. Phosphoserine occurs at positions 12, 14, 43, 62, and 66. Positions 35–48 (ALTNSGKRSPACSS) are enriched in polar residues. Positions 96-117 (ESDEQPLDPIPQISSTPKTSEE) are disordered. Thr-111 carries the post-translational modification Phosphothreonine; by GSK3-beta. 3 positions are modified to phosphoserine: Ser-135, Ser-159, and Ser-334. Thr-336 bears the Phosphothreonine mark. Phosphoserine is present on residues Ser-341, Ser-353, and Ser-362. Polar residues predominate over residues 390 to 405 (PSAPQEKSTNTSQTGL). Residues 390-416 (PSAPQEKSTNTSQTGLVGTKHSTSETE) are disordered. The interaction with KNSTRN stretch occupies residues 482 to 850 (NKLQHLKESH…LKDTVENLTA (369 aa)). 2 coiled-coil regions span residues 545–608 (CCFD…SMRE) and 759–868 (QLTQ…EKTR). Thr-937 is modified (phosphothreonine; by GSK3-beta). Ser-974 bears the Phosphoserine; by GSK3-beta mark. A Phosphothreonine; by GSK3-beta modification is found at Thr-978. The stretch at 979 to 1174 (ELQSLCSLLQ…VQHIYKTLLS (196 aa)) forms a coiled coil.

As to quaternary structure, homodimer, with a globular head domain and a long stalk. Homooligomer; the globular head domains associate, resulting in aster-like structures. Binds to microtubules in the mitotic spindle. Interacts with DCLRE1B/Apollo. Part of an astrin (SPAG5)-kinastrin (SKAP) complex containing KNSTRN, SPAG5, PLK1, DYNLL1 and SGO2. Interacts with KNSTRN. Interacts with RPTOR; this interaction competes with RPTOR binding to MTOR, resulting in decreased mTORC1 formation. Interacts with G3BP1. The complex formed with G3BP1 AND RPTOR is increased by oxidative stress. Interacts with OSBPL8, PCM1 and CDK5RAP2. Interacts (via C-terminus) with NUMA1 (via C-terminus); this interaction promotes the recruitment of SPAG5 to the microtubules at spindle poles in a dynein-dynactin-dependent manner. Interacts with DYNLL1. Post-translationally, phosphorylated by AURKA. In terms of tissue distribution, highly expressed in testis. Detected at low levels in placenta, liver, pancreas, thymus and colon.

The protein localises to the cytoplasm. Its subcellular location is the cytoskeleton. It localises to the spindle. The protein resides in the spindle pole. It is found in the chromosome. The protein localises to the centromere. Its subcellular location is the kinetochore. It localises to the midbody. The protein resides in the microtubule organizing center. It is found in the centrosome. The protein localises to the cytoplasmic granule. Its subcellular location is the centriolar satellite. In terms of biological role, essential component of the mitotic spindle required for normal chromosome segregation and progression into anaphase. Required for chromosome alignment, normal timing of sister chromatid segregation, and maintenance of spindle pole architecture. In complex with SKAP, promotes stable microtubule-kinetochore attachments. May contribute to the regulation of separase activity. May regulate AURKA localization to mitotic spindle, but not to centrosomes and CCNB1 localization to both mitotic spindle and centrosomes. Involved in centriole duplication. Required for CDK5RAP2, CEP152, WDR62 and CEP63 centrosomal localization and promotes the centrosomal localization of CDK2. In non-mitotic cells, upon stress induction, inhibits mammalian target of rapamycin complex 1 (mTORC1) association and recruits the mTORC1 component RPTOR to stress granules (SGs), thereby preventing mTORC1 hyperactivation-induced apoptosis. May enhance GSK3B-mediated phosphorylation of other substrates, such as MAPT/TAU. This Homo sapiens (Human) protein is Sperm-associated antigen 5 (SPAG5).